Here is a 456-residue protein sequence, read N- to C-terminus: Enolase (456 aa).

Gln164 is a (2R)-2-phosphoglycerate binding site. Glu207 functions as the Proton donor in the catalytic mechanism. Asp244, Glu287, and Asp314 together coordinate Mg(2+). (2R)-2-phosphoglycerate is bound by residues Lys339, Arg368, Ser369, and Lys390. Residue Lys339 is the Proton acceptor of the active site.

The protein belongs to the enolase family. Component of the RNA degradosome, a multiprotein complex involved in RNA processing and mRNA degradation. Requires Mg(2+) as cofactor.

Its subcellular location is the cytoplasm. It is found in the secreted. The protein resides in the cell surface. The enzyme catalyses (2R)-2-phosphoglycerate = phosphoenolpyruvate + H2O. Its pathway is carbohydrate degradation; glycolysis; pyruvate from D-glyceraldehyde 3-phosphate: step 4/5. Catalyzes the reversible conversion of 2-phosphoglycerate (2-PG) into phosphoenolpyruvate (PEP). It is essential for the degradation of carbohydrates via glycolysis. This chain is Enolase, found in Francisella tularensis subsp. holarctica (strain OSU18).